A 256-amino-acid polypeptide reads, in one-letter code: Small ribosomal subunit protein eS1 (256 aa).

The span at 1-18 (MAVGKNKRLSKGKKGLKK) shows a compositional bias: basic residues. Residues 1–22 (MAVGKNKRLSKGKKGLKKKTQD) are disordered. Ala-2 carries the N-acetylalanine; partial modification.

This sequence belongs to the eukaryotic ribosomal protein eS1 family. As to quaternary structure, component of the small ribosomal subunit. Mature ribosomes consist of a small (40S) and a large (60S) subunit. The 40S subunit contains about 33 different proteins and 1 molecule of RNA (18S). The 60S subunit contains about 49 different proteins and 3 molecules of RNA (25S, 5.8S and 5S).

Its subcellular location is the cytoplasm. The sequence is that of Small ribosomal subunit protein eS1 from Pyricularia oryzae (strain Y34) (Rice blast fungus).